The sequence spans 123 residues: uncharacterized protein (123 aa).

A helical transmembrane segment spans residues Gly5–Tyr25. Residues Lys32–Asp53 form a disordered region. Residues Val35–Pro47 are compositionally biased toward pro residues.

The protein belongs to the asfivirus CP123L family.

The protein localises to the host membrane. The protein resides in the virion. This is an uncharacterized protein from Ornithodoros (relapsing fever ticks).